A 312-amino-acid polypeptide reads, in one-letter code: Non-structural protein 12A (312 aa).

Low complexity predominate over residues methionine 1 to glycine 23. Disordered regions lie at residues methionine 1–valine 37, phenylalanine 62–asparagine 97, and serine 112–threonine 159. A compositionally biased stretch (basic and acidic residues) spans valine 63 to leucine 73. Residues lysine 74 to asparagine 97 show a composition bias toward polar residues. A compositionally biased stretch (basic and acidic residues) spans aspartate 122 to glutamine 134. Residues glutamate 135 to arginine 154 are compositionally biased toward polar residues.

Belongs to the phytoreovirus non-structural protein Pns12A family.

The protein resides in the host cytoplasm. Constituent of viral factories. This is Non-structural protein 12A from Rice dwarf virus (isolate O) (RDV).